We begin with the raw amino-acid sequence, 474 residues long: Protein nucleotidyltransferase YdiU (474 aa).

ATP-binding residues include G89, G91, R92, K112, D124, G125, R175, and R182. D256 acts as the Proton acceptor in catalysis. N257 and D266 together coordinate Mg(2+). D266 serves as a coordination point for ATP.

It belongs to the SELO family. It depends on Mg(2+) as a cofactor. The cofactor is Mn(2+).

The enzyme catalyses L-seryl-[protein] + ATP = 3-O-(5'-adenylyl)-L-seryl-[protein] + diphosphate. The catalysed reaction is L-threonyl-[protein] + ATP = 3-O-(5'-adenylyl)-L-threonyl-[protein] + diphosphate. It catalyses the reaction L-tyrosyl-[protein] + ATP = O-(5'-adenylyl)-L-tyrosyl-[protein] + diphosphate. It carries out the reaction L-histidyl-[protein] + UTP = N(tele)-(5'-uridylyl)-L-histidyl-[protein] + diphosphate. The enzyme catalyses L-seryl-[protein] + UTP = O-(5'-uridylyl)-L-seryl-[protein] + diphosphate. The catalysed reaction is L-tyrosyl-[protein] + UTP = O-(5'-uridylyl)-L-tyrosyl-[protein] + diphosphate. In terms of biological role, nucleotidyltransferase involved in the post-translational modification of proteins. It can catalyze the addition of adenosine monophosphate (AMP) or uridine monophosphate (UMP) to a protein, resulting in modifications known as AMPylation and UMPylation. The sequence is that of Protein nucleotidyltransferase YdiU from Corynebacterium glutamicum (strain R).